Here is a 282-residue protein sequence, read N- to C-terminus: MSWIEKILPRTKSPTKSNVPEGIWTKCGQCDAVLYKTELEKQLGVCPKCNHHMRVSARARLNQFLDQGERTELGSELEPKDLLKFKDSKKYKDRLVAAQKATNEKDALVVMQGKLKGMPVVVAAFEFAFMGGSMASVVGARFVKAVEACLEHNMPLICFSTSGGARMQEALLSLMQMAKTSAALAKMSEKGLPYISVMTDPTMGGVSASLAMLGDVNVAEPRALIGFAGPRVIEQTVRETLPEGFQRSEFLLEKGAIDVIIDRREMRDRLHSMLSKLHHQQA.

The CoA carboxyltransferase N-terminal domain occupies 23–282 (IWTKCGQCDA…MLSKLHHQQA (260 aa)). The Zn(2+) site is built by Cys-27, Cys-30, Cys-46, and Cys-49. The segment at 27–49 (CGQCDAVLYKTELEKQLGVCPKC) adopts a C4-type zinc-finger fold.

It belongs to the AccD/PCCB family. In terms of assembly, acetyl-CoA carboxylase is a heterohexamer composed of biotin carboxyl carrier protein (AccB), biotin carboxylase (AccC) and two subunits each of ACCase subunit alpha (AccA) and ACCase subunit beta (AccD). It depends on Zn(2+) as a cofactor.

It localises to the cytoplasm. The catalysed reaction is N(6)-carboxybiotinyl-L-lysyl-[protein] + acetyl-CoA = N(6)-biotinyl-L-lysyl-[protein] + malonyl-CoA. It participates in lipid metabolism; malonyl-CoA biosynthesis; malonyl-CoA from acetyl-CoA: step 1/1. Component of the acetyl coenzyme A carboxylase (ACC) complex. Biotin carboxylase (BC) catalyzes the carboxylation of biotin on its carrier protein (BCCP) and then the CO(2) group is transferred by the transcarboxylase to acetyl-CoA to form malonyl-CoA. The polypeptide is Acetyl-coenzyme A carboxylase carboxyl transferase subunit beta (Pseudoalteromonas atlantica (strain T6c / ATCC BAA-1087)).